The sequence spans 319 residues: tRNA uridine(34) hydroxylase (319 aa).

In terms of domain architecture, Rhodanese spans 124–218 (LDEDTVILDA…YGKNEETKGE (95 aa)). The active-site Cysteine persulfide intermediate is the C178.

This sequence belongs to the TrhO family.

It catalyses the reaction uridine(34) in tRNA + AH2 + O2 = 5-hydroxyuridine(34) in tRNA + A + H2O. Its function is as follows. Catalyzes oxygen-dependent 5-hydroxyuridine (ho5U) modification at position 34 in tRNAs. The polypeptide is tRNA uridine(34) hydroxylase (Listeria welshimeri serovar 6b (strain ATCC 35897 / DSM 20650 / CCUG 15529 / CIP 8149 / NCTC 11857 / SLCC 5334 / V8)).